A 461-amino-acid chain; its full sequence is Ufm1-specific protease 2 (461 aa).

Catalysis depends on residues Cys294, Asp418, and His420.

Belongs to the peptidase C78 family.

It localises to the endoplasmic reticulum. The protein resides in the cytoplasm. The protein localises to the nucleus. Functionally, thiol-dependent isopeptidase that specifically cleaves UFM1, a ubiquitin-like modifier protein, from conjugated proteins, such as CD274/PD-L1, CYB5R3, DDRGK1, MRE11, RPL26/uL24, TRIP4 and RPL26/uL24. While it is also able to mediate the processing of UFM1 precursors, a prerequisite for conjugation reactions, UFSP2 mainly acts as a protein deUFMylase that mediates deconjugation of UFM1 from target proteins. Mediates deUFMylation of RPL26/uL24, a critical step to release the UFM1 ribosome E3 ligase (UREL) complex during the recycling of 60S ribosome subunits from the endoplasmic reticulum. Catalyzes deUFMylation of TRIP4, regulating intracellular nuclear receptors transactivation and thereby regulate cell proliferation and differentiation. The sequence is that of Ufm1-specific protease 2 from Rattus norvegicus (Rat).